The chain runs to 103 residues: Acylphosphatase-2 (103 aa).

Serine 2 carries the N-acetylserine modification. Residues 13–103 form the Acylphosphatase-like domain; the sequence is SVDYEVFGRV…LDFSGFSTRY (91 aa). Residues arginine 28 and asparagine 46 contribute to the active site.

It belongs to the acylphosphatase family.

It catalyses the reaction an acyl phosphate + H2O = a carboxylate + phosphate + H(+). Its function is as follows. Its physiological role is not yet clear. The sequence is that of Acylphosphatase-2 (ACYP2) from Gallus gallus (Chicken).